The following is a 595-amino-acid chain: ATPase family AAA domain-containing protein 3 (595 aa).

The disordered stretch occupies residues 1–48 (MSWLFGVQKNATPQIPDDFQAGAAPGGPQQPGQGQRQEGNSKMAYSFD). The Mitochondrial intermembrane segment spans residues 1-243 (MSWLFGVQKN…LNQFLNDKTK (243 aa)). Low complexity predominate over residues 20-35 (QAGAAPGGPQQPGQGQ). Coiled coils occupy residues 80–107 (VTRQKEVENETKKIEAQLANMKSEHIRV) and 140–175 (EELAMKARMQEESLRKQEESVKKQEQLRKQTIEHEL). Residues 244 to 260 (IAAAVGGLTALAVGWYT) form a helical membrane-spanning segment. Topologically, residues 261 to 595 (AKRGTGVTAR…GTTLKRETAV (335 aa)) are mitochondrial matrix. 349-356 (GPPGTGKT) is an ATP binding site. The PDZ-binding motif lies at 592-595 (ETAV).

Belongs to the AAA ATPase family.

It localises to the mitochondrion inner membrane. It is found in the mitochondrion matrix. The protein localises to the mitochondrion nucleoid. Functionally, essential for mitochondrial network organization, mitochondrial metabolism and cell growth at organism and cellular level. Important during development for the up-regulation of mitochondrial activity during the transition to higher larval stages. Regulates mitochondrial iron homeostasis. May play an important role in mitochondrial protein synthesis. May also participate in mitochondrial DNA replication. May bind to mitochondrial DNA D-loops and contribute to nucleoid stability. Plays a role in regulating the production of reactive oxygen species in response to heat stress. The protein is ATPase family AAA domain-containing protein 3 of Caenorhabditis elegans.